A 436-amino-acid chain; its full sequence is Gustatory receptor for sugar taste 61a (436 aa).

The Cytoplasmic segment spans residues 1 to 78; that stretch reads MSRTSDDIRK…PQDVKFKVRS (78 aa). Residues 79 to 99 form a helical membrane-spanning segment; the sequence is IGLAVTGLFLLLGGMKTLVGA. The Extracellular segment spans residues 100 to 111; sequence NILFTEGLNAKN. Residues 112 to 132 form a helical membrane-spanning segment; the sequence is IVGLVFLIVGMVNWLNFVGFA. Residues 133 to 164 are Cytoplasmic-facing; it reads RSWSHIMLPWSSVDILMLFPPYKRGKRSLRSK. Residues 165–185 form a helical membrane-spanning segment; it reads VNVLALSVVVLAVGDHMLYYA. Topologically, residues 186–214 are extracellular; that stretch reads SGYCSYSMHILQCHTNHSRITFGLYLEKE. N-linked (GlcNAc...) asparagine glycosylation is present at Asn201. The helical transmembrane segment at 215–235 threads the bilayer; the sequence is FSDIMFIMPFNIFSMCYGFWL. At 236-237 the chain is on the cytoplasmic side; that stretch reads NG. A helical membrane pass occupies residues 238 to 258; sequence AFTFLWNFMDIFIVMTSIGLA. The Extracellular portion of the chain corresponds to 259 to 304; the sequence is QRFQQFAARVGALEGRHVPEALWYDIRRDHIRLCELASLVEASMSN. The helical transmembrane segment at 305 to 325 threads the bilayer; that stretch reads IVFVSCANNVYVICNQALAIF. The Cytoplasmic segment spans residues 326–334; the sequence is TKLRHPINY. The chain crosses the membrane as a helical span at residues 335–355; it reads VYFWYSLIFLLARTSLVFMTA. Residues 356-436 lie on the Extracellular side of the membrane; sequence SKIHDASLLP…AKSHKGLRCA (81 aa).

It belongs to the insect chemoreceptor superfamily. Gustatory receptor (GR) family. Gr5a subfamily. In terms of tissue distribution, expressed in sweet sensing neurons of classical chemosensory sensilla, but also in two supersensitive neurons of atypical taste sensilla.

It is found in the cell membrane. Functionally, one of the few identified sugar gustatory receptors identified so far with glucose being its primary ligand and which mediates acceptance behavior. The chain is Gustatory receptor for sugar taste 61a (Gr61a) from Drosophila melanogaster (Fruit fly).